An 821-amino-acid chain; its full sequence is DNA ligase (821 aa).

NAD(+) contacts are provided by residues 50–54, 99–100, and E140; these read DAEYD and SL. The active-site N6-AMP-lysine intermediate is K142. NAD(+) contacts are provided by R163, E200, K319, and K343. Positions 452, 455, 470, and 476 each coordinate Zn(2+). The region spanning 742–821 is the BRCT domain; sequence AAALPLEGKT…AGLQALLAGN (80 aa).

This sequence belongs to the NAD-dependent DNA ligase family. LigA subfamily. It depends on Mg(2+) as a cofactor. Requires Mn(2+) as cofactor.

The catalysed reaction is NAD(+) + (deoxyribonucleotide)n-3'-hydroxyl + 5'-phospho-(deoxyribonucleotide)m = (deoxyribonucleotide)n+m + AMP + beta-nicotinamide D-nucleotide.. Functionally, DNA ligase that catalyzes the formation of phosphodiester linkages between 5'-phosphoryl and 3'-hydroxyl groups in double-stranded DNA using NAD as a coenzyme and as the energy source for the reaction. It is essential for DNA replication and repair of damaged DNA. The chain is DNA ligase from Chromobacterium violaceum (strain ATCC 12472 / DSM 30191 / JCM 1249 / CCUG 213 / NBRC 12614 / NCIMB 9131 / NCTC 9757 / MK).